We begin with the raw amino-acid sequence, 350 residues long: tRNA dimethylallyltransferase (350 aa).

The interval 1–20 is disordered; it reads MMNTERPAGPLRPPHPPHPP. Residues 10–20 are compositionally biased toward pro residues; that stretch reads PLRPPHPPHPP. 27–34 contributes to the ATP binding site; sequence GPTASGKT. Residue 29–34 participates in substrate binding; sequence TASGKT. Interaction with substrate tRNA regions lie at residues 52 to 55, 176 to 180, and 273 to 278; these read DSAL, QRIAR, and RCVGYR.

It belongs to the IPP transferase family. As to quaternary structure, monomer. Mg(2+) serves as cofactor.

It carries out the reaction adenosine(37) in tRNA + dimethylallyl diphosphate = N(6)-dimethylallyladenosine(37) in tRNA + diphosphate. Functionally, catalyzes the transfer of a dimethylallyl group onto the adenine at position 37 in tRNAs that read codons beginning with uridine, leading to the formation of N6-(dimethylallyl)adenosine (i(6)A). This is tRNA dimethylallyltransferase from Albidiferax ferrireducens (strain ATCC BAA-621 / DSM 15236 / T118) (Rhodoferax ferrireducens).